Reading from the N-terminus, the 130-residue chain is Mating-type-like protein A1 (130 aa).

Positions 68 to 127 (TYTTRKPLPAKAKLQLVETFSKKRYLTRCEKHQLAVQCGITTNQVQIWFANRRKRSKDLN) form a DNA-binding region, homeobox.

It belongs to the MATA1 family.

The protein resides in the nucleus. Its function is as follows. Mating type proteins are sequence specific DNA-binding proteins that act as master switches in yeast differentiation by controlling gene expression in a cell type-specific fashion. This chain is Mating-type-like protein A1 (MTL1A1), found in Candida glabrata (strain ATCC 2001 / BCRC 20586 / JCM 3761 / NBRC 0622 / NRRL Y-65 / CBS 138) (Yeast).